A 99-amino-acid polypeptide reads, in one-letter code: Beta-defensin 127 (99 aa).

An N-terminal signal peptide occupies residues 1–20 (MGLFMIIAILLFQKPTVTEQ). 3 disulfide bridges follow: cysteine 24–cysteine 53, cysteine 33–cysteine 47, and cysteine 37–cysteine 54. A propeptide spanning residues 66–99 (ITKPSHPKPATLALTLQDYVTIIENFPSLKTQST) is cleaved from the precursor.

It belongs to the beta-defensin family.

The protein localises to the secreted. Has antibacterial activity. This is Beta-defensin 127 (DEFB127) from Pan troglodytes (Chimpanzee).